The primary structure comprises 184 residues: UPF0316 protein BLi00691/BL01474 (184 aa).

3 helical membrane-spanning segments follow: residues 9–29 (GVIM…FLTL), 41–61 (LAAF…GLVL), and 67–87 (IQNV…GTKI).

This sequence belongs to the UPF0316 family.

The protein localises to the cell membrane. The protein is UPF0316 protein BLi00691/BL01474 of Bacillus licheniformis (strain ATCC 14580 / DSM 13 / JCM 2505 / CCUG 7422 / NBRC 12200 / NCIMB 9375 / NCTC 10341 / NRRL NRS-1264 / Gibson 46).